The sequence spans 476 residues: Aspartyl/glutamyl-tRNA(Asn/Gln) amidotransferase subunit B (476 aa).

It belongs to the GatB/GatE family. GatB subfamily. As to quaternary structure, heterotrimer of A, B and C subunits.

It carries out the reaction L-glutamyl-tRNA(Gln) + L-glutamine + ATP + H2O = L-glutaminyl-tRNA(Gln) + L-glutamate + ADP + phosphate + H(+). It catalyses the reaction L-aspartyl-tRNA(Asn) + L-glutamine + ATP + H2O = L-asparaginyl-tRNA(Asn) + L-glutamate + ADP + phosphate + 2 H(+). Its function is as follows. Allows the formation of correctly charged Asn-tRNA(Asn) or Gln-tRNA(Gln) through the transamidation of misacylated Asp-tRNA(Asn) or Glu-tRNA(Gln) in organisms which lack either or both of asparaginyl-tRNA or glutaminyl-tRNA synthetases. The reaction takes place in the presence of glutamine and ATP through an activated phospho-Asp-tRNA(Asn) or phospho-Glu-tRNA(Gln). The protein is Aspartyl/glutamyl-tRNA(Asn/Gln) amidotransferase subunit B of Latilactobacillus sakei subsp. sakei (strain 23K) (Lactobacillus sakei subsp. sakei).